The primary structure comprises 360 residues: tRNA N6-adenosine threonylcarbamoyltransferase (360 aa).

Histidine 115 and histidine 119 together coordinate Fe cation. Residues leucine 137–glycine 141, aspartate 170, glycine 183, and asparagine 283 each bind substrate. Residue aspartate 311 coordinates Fe cation.

This sequence belongs to the KAE1 / TsaD family. It depends on Fe(2+) as a cofactor.

Its subcellular location is the cytoplasm. The catalysed reaction is L-threonylcarbamoyladenylate + adenosine(37) in tRNA = N(6)-L-threonylcarbamoyladenosine(37) in tRNA + AMP + H(+). Its function is as follows. Required for the formation of a threonylcarbamoyl group on adenosine at position 37 (t(6)A37) in tRNAs that read codons beginning with adenine. Is involved in the transfer of the threonylcarbamoyl moiety of threonylcarbamoyl-AMP (TC-AMP) to the N6 group of A37, together with TsaE and TsaB. TsaD likely plays a direct catalytic role in this reaction. This Rhizobium meliloti (strain 1021) (Ensifer meliloti) protein is tRNA N6-adenosine threonylcarbamoyltransferase.